A 316-amino-acid chain; its full sequence is Sulfate adenylyltransferase subunit 2 (316 aa).

The tract at residues 297 to 316 (RAIDRDQSGSMEKKKREGYF) is disordered.

Belongs to the PAPS reductase family. CysD subfamily. Heterodimer composed of CysD, the smaller subunit, and CysN.

It catalyses the reaction sulfate + ATP + H(+) = adenosine 5'-phosphosulfate + diphosphate. It functions in the pathway sulfur metabolism; hydrogen sulfide biosynthesis; sulfite from sulfate: step 1/3. Functionally, with CysN forms the ATP sulfurylase (ATPS) that catalyzes the adenylation of sulfate producing adenosine 5'-phosphosulfate (APS) and diphosphate, the first enzymatic step in sulfur assimilation pathway. APS synthesis involves the formation of a high-energy phosphoric-sulfuric acid anhydride bond driven by GTP hydrolysis by CysN coupled to ATP hydrolysis by CysD. The polypeptide is Sulfate adenylyltransferase subunit 2 (Allorhizobium ampelinum (strain ATCC BAA-846 / DSM 112012 / S4) (Agrobacterium vitis (strain S4))).